Reading from the N-terminus, the 309-residue chain is Sulfate adenylyltransferase subunit 2 (309 aa).

This sequence belongs to the PAPS reductase family. CysD subfamily. Heterodimer composed of CysD, the smaller subunit, and CysN.

It carries out the reaction sulfate + ATP + H(+) = adenosine 5'-phosphosulfate + diphosphate. Its pathway is sulfur metabolism; hydrogen sulfide biosynthesis; sulfite from sulfate: step 1/3. Its function is as follows. With CysN forms the ATP sulfurylase (ATPS) that catalyzes the adenylation of sulfate producing adenosine 5'-phosphosulfate (APS) and diphosphate, the first enzymatic step in sulfur assimilation pathway. APS synthesis involves the formation of a high-energy phosphoric-sulfuric acid anhydride bond driven by GTP hydrolysis by CysN coupled to ATP hydrolysis by CysD. This Mycobacterium sp. (strain JLS) protein is Sulfate adenylyltransferase subunit 2.